The following is a 188-amino-acid chain: Ribosome-recycling factor (188 aa).

Belongs to the RRF family.

It is found in the cytoplasm. Its function is as follows. Responsible for the release of ribosomes from messenger RNA at the termination of protein biosynthesis. May increase the efficiency of translation by recycling ribosomes from one round of translation to another. The sequence is that of Ribosome-recycling factor from Anaeromyxobacter dehalogenans (strain 2CP-C).